The sequence spans 312 residues: Cytochrome c biogenesis protein CcsA (312 aa).

Transmembrane regions (helical) follow at residues 12-32, 47-67, 72-92, 98-118, 144-164, 220-240, 254-271, and 281-301; these read NLVF…LSFF, IVAN…AGYF, LYES…YVEF, LVGA…NLTL, MMLS…FLVI, IIGL…VWAN, TWAL…HSRI, and AILG…VNFL.

Belongs to the CcmF/CycK/Ccl1/NrfE/CcsA family. In terms of assembly, may interact with Ccs1.

The protein resides in the plastid. Its subcellular location is the chloroplast thylakoid membrane. In terms of biological role, required during biogenesis of c-type cytochromes (cytochrome c6 and cytochrome f) at the step of heme attachment. This chain is Cytochrome c biogenesis protein CcsA, found in Trieres chinensis (Marine centric diatom).